A 486-amino-acid chain; its full sequence is Hematopoietic lineage cell-specific protein (486 aa).

The segment at 27 to 66 (FVNDISEKEQRWGAKTIEGSGRTEHINIHQLRNKVSEEHD) is involved in HAX-1 binding. Residue K41 is modified to N6-acetyllysine. Cortactin repeat units follow at residues 79 to 115 (ASHGYGGRFGVERDRMDKSAVGHEYVADVEKHSSQTD), 116 to 152 (AARGFGGKYGVERDRADKSAVGFDYKGEVEKHASQKD), and 153 to 189 (YSHGFGGRYGVEKDKRDKAALGYDYKGETEKHESQRD). An N6-acetyllysine modification is found at K123. At Y140 the chain carries Phosphotyrosine. One copy of the Cortactin 4; truncated repeat lies at 190 to 212 (YAKGFGGQYGIQKDRVDKSAVGF). K192 bears the N6-acetyllysine mark. Phosphotyrosine is present on Y198. Position 222 is a phosphotyrosine; by FGR (Y222). The disordered stretch occupies residues 226 to 430 (TPIEAASSGA…AGPSAGAGGA (205 aa)). 2 stretches are compositionally biased toward basic and acidic residues: residues 240 to 258 (AKFESLAEEKRKREEEEKA) and 265 to 276 (QQERKAVVKMSR). The residue at position 241 (K241) is an N6-acetyllysine. S275 is subject to Phosphoserine. Phosphothreonine is present on T330. Position 333 is a phosphoserine (S333). Low complexity predominate over residues 358-367 (VVEEPVYEAA). A compositionally biased stretch (acidic residues) spans 368–413 (PELEPEPEPDYEPEPETEPDYEDVGELDRQDEDAEGDYEDVLEPED). Y388 and Y405 each carry phosphotyrosine; by SYK and FES. The region spanning 429 to 486 (GAGISAIALYDYQGEGSDELSFDPDDIITDIEMVDEGWWRGQCRGHFGLFPANYVKLL) is the SH3 domain.

Interacts (via SH2 domain) with FGR. Associates with the SH2 and SH3 domains of LCK. Binding to he LCK SH3 domain occurs constitutively, while binding to the LCK SH2 domain occurs only upon TCR stimulation. A similar binding pattern was observed with LYN, but not with FYN in which the FYN SH2 region associates upon TCR stimulation but the FYN SH3 region does not associate regardless of TCR stimulation. Directly associates with HAX1, through binding to its C-terminal region. Interacts with HS1BP3. Interacts with FES/FPS. Forms a multiprotein complex with LYN and ANKRD54. Post-translationally, phosphorylated by LYN, FYN and FGR after cross-linking of surface IgM on B-cells. Phosphorylation by LYN, FYN and FGR requires prior phosphorylation by SYK. Binds to LCK in vivo, and is tyrosine phosphorylated upon TCR stimulation. Phosphorylated by FES. In terms of tissue distribution, expressed only in tissues and cells of hematopoietic origin.

It localises to the mitochondrion. Its function is as follows. Substrate of the antigen receptor-coupled tyrosine kinase. Plays a role in antigen receptor signaling for both clonal expansion and deletion in lymphoid cells. May also be involved in the regulation of gene expression. The polypeptide is Hematopoietic lineage cell-specific protein (Hcls1) (Mus musculus (Mouse)).